The following is a 246-amino-acid chain: mRNA-decapping protein g5R (246 aa).

Positions 91–239 constitute a Nudix hydrolase domain; the sequence is KYQKFKKNWL…IIGPAFNFIK (149 aa). The Nudix box motif lies at 128 to 149; it reads GKPKENESDLACAIREFEEETG. E134 is a binding site for Mg(2+). The Nucleophile role is filled by E143. Mg(2+) contacts are provided by E147 and E169.

Belongs to the Nudix hydrolase family. DIPP subfamily. As to quaternary structure, interacts with host RPL23A. Mg(2+) is required as a cofactor. Requires Mn(2+) as cofactor.

The protein localises to the host rough endoplasmic reticulum. It catalyses the reaction diphospho-myo-inositol polyphosphate + H2O = myo-inositol polyphosphate + phosphate.. Functionally, decapping enzyme required for the removal of the 5'-end m7GpppN cap tethered to viral and host mRNAs to allow their decay in cells. May therefore accelerate viral and cellular mRNA turnover to eliminate competing host mRNAs and allow stage-specific synthesis of viral proteins. Acceleration of the turnover of cellular transcripts may even promote the shutoff of host protein synthesis. In addition to the mRNA cap, g5R also efficiently hydrolyzes diphosphoinositol polyphosphates. Down-regulation of the level of PP-InsP5 (diphosphoinositol pentakisphosphate) may play a role in viral manipulation of the cellular secretory pathway, a step necessary for the formation of virions. Binds viral and cellular poly(A) mRNAs, thereby decreasing both types of mRNAs. This African swine fever virus (isolate Pig/Kenya/KEN-50/1950) (ASFV) protein is mRNA-decapping protein g5R.